Here is a 95-residue protein sequence, read N- to C-terminus: MKFAHDILRKPLISEKSMSLTEGNKYTFIVDPRANKTEIKKAVEEIFKVKVLKVNTIRVKGKQVRRRNILGRKPETKKAVVTLRPGDKIEIFEGV.

Belongs to the universal ribosomal protein uL23 family. Part of the 50S ribosomal subunit. Contacts protein L29, and trigger factor when it is bound to the ribosome.

Functionally, one of the early assembly proteins it binds 23S rRNA. One of the proteins that surrounds the polypeptide exit tunnel on the outside of the ribosome. Forms the main docking site for trigger factor binding to the ribosome. This is Large ribosomal subunit protein uL23 from Desulforudis audaxviator (strain MP104C).